Consider the following 619-residue polypeptide: 1-deoxy-D-xylulose-5-phosphate synthase (619 aa).

Residues His-74 and 115-117 (GHS) contribute to the thiamine diphosphate site. Residue Asp-146 coordinates Mg(2+). Thiamine diphosphate is bound by residues 147-148 (GA), Asn-175, and Tyr-285. Asn-175 lines the Mg(2+) pocket. A disordered region spans residues 289–312 (EKSPSKYHAVPPRANEKEKPSKPC). Residues 302 to 312 (ANEKEKPSKPC) are compositionally biased toward basic and acidic residues. A thiamine diphosphate-binding site is contributed by Glu-365.

It belongs to the transketolase family. DXPS subfamily. Homodimer. Requires Mg(2+) as cofactor. Thiamine diphosphate is required as a cofactor.

It catalyses the reaction D-glyceraldehyde 3-phosphate + pyruvate + H(+) = 1-deoxy-D-xylulose 5-phosphate + CO2. The protein operates within metabolic intermediate biosynthesis; 1-deoxy-D-xylulose 5-phosphate biosynthesis; 1-deoxy-D-xylulose 5-phosphate from D-glyceraldehyde 3-phosphate and pyruvate: step 1/1. Its function is as follows. Catalyzes the acyloin condensation reaction between C atoms 2 and 3 of pyruvate and glyceraldehyde 3-phosphate to yield 1-deoxy-D-xylulose-5-phosphate (DXP). This chain is 1-deoxy-D-xylulose-5-phosphate synthase, found in Clostridium botulinum (strain Eklund 17B / Type B).